The primary structure comprises 440 residues: Trigger factor (440 aa).

Residues 161 to 257 (GDYVKLAYEG…VLEVRERVLP (97 aa)) form the PPIase FKBP-type domain.

This sequence belongs to the FKBP-type PPIase family. Tig subfamily.

The protein localises to the cytoplasm. It carries out the reaction [protein]-peptidylproline (omega=180) = [protein]-peptidylproline (omega=0). Involved in protein export. Acts as a chaperone by maintaining the newly synthesized protein in an open conformation. Functions as a peptidyl-prolyl cis-trans isomerase. The sequence is that of Trigger factor from Opitutus terrae (strain DSM 11246 / JCM 15787 / PB90-1).